A 564-amino-acid polypeptide reads, in one-letter code: Bifunctional sesquiterpene synthase 1 (564 aa).

The Mg(2+) site is built by Asp317, Asp321, Asp461, and Glu469. The DDXXD motif motif lies at 317–321; that stretch reads DDTFD.

Belongs to the terpene synthase family. Mg(2+) is required as a cofactor.

It catalyses the reaction (2E,6E)-farnesyl diphosphate = alpha-copaene + diphosphate. The enzyme catalyses (2E,6E)-farnesyl diphosphate = delta-cadinene + diphosphate. The protein operates within secondary metabolite biosynthesis; terpenoid biosynthesis. Its function is as follows. Sesquiterpene synthase converting farnesyl diphosphate to alpha copaene and delta-cadinene as the major products. The polypeptide is Bifunctional sesquiterpene synthase 1 (Phyla dulcis (Aztec sweet herb)).